Here is a 408-residue protein sequence, read N- to C-terminus: UPF0761 membrane protein Avin_36810 (408 aa).

The next 6 helical transmembrane spans lie at 33 to 53 (YTAL…LSVV), 92 to 112 (HLTW…LMTV), 132 to 152 (FLLH…GFAL), 174 to 194 (LLKV…YVAV), 209 to 229 (LFAA…VALF), and 238 to 258 (AFAA…IVLL).

This sequence belongs to the UPF0761 family.

Its subcellular location is the cell inner membrane. The sequence is that of UPF0761 membrane protein Avin_36810 from Azotobacter vinelandii (strain DJ / ATCC BAA-1303).